The following is a 355-amino-acid chain: Protein RecA (355 aa).

ATP is bound at residue Gly-65 to Thr-72. The interval Ile-333–Glu-355 is disordered. The span at Lys-336 to Glu-347 shows a compositional bias: basic and acidic residues.

The protein belongs to the RecA family.

It is found in the cytoplasm. Its function is as follows. Can catalyze the hydrolysis of ATP in the presence of single-stranded DNA, the ATP-dependent uptake of single-stranded DNA by duplex DNA, and the ATP-dependent hybridization of homologous single-stranded DNAs. It interacts with LexA causing its activation and leading to its autocatalytic cleavage. The chain is Protein RecA from Staphylococcus carnosus (strain TM300).